The primary structure comprises 212 residues: Nuclear transcription factor Y subunit C-7 (212 aa).

Residues 1-10 (MEENNGNNNH) show a composition bias toward polar residues. Disordered regions lie at residues 1-23 (MEEN…LPPP) and 190-212 (EWPA…SGGN).

The protein belongs to the NFYC/HAP5 subunit family. In terms of assembly, heterotrimeric transcription factor composed of three components, NF-YA, NF-YB and NF-YC. NF-YB and NF-YC must interact and dimerize for NF-YA association and DNA binding. As to expression, expressed in flowers.

It localises to the nucleus. Its function is as follows. Stimulates the transcription of various genes by recognizing and binding to a CCAAT motif in promoters. The polypeptide is Nuclear transcription factor Y subunit C-7 (NFYC7) (Arabidopsis thaliana (Mouse-ear cress)).